A 571-amino-acid polypeptide reads, in one-letter code: Proline--tRNA ligase (571 aa).

Belongs to the class-II aminoacyl-tRNA synthetase family. ProS type 1 subfamily. As to quaternary structure, homodimer.

It is found in the cytoplasm. It catalyses the reaction tRNA(Pro) + L-proline + ATP = L-prolyl-tRNA(Pro) + AMP + diphosphate. Its function is as follows. Catalyzes the attachment of proline to tRNA(Pro) in a two-step reaction: proline is first activated by ATP to form Pro-AMP and then transferred to the acceptor end of tRNA(Pro). As ProRS can inadvertently accommodate and process non-cognate amino acids such as alanine and cysteine, to avoid such errors it has two additional distinct editing activities against alanine. One activity is designated as 'pretransfer' editing and involves the tRNA(Pro)-independent hydrolysis of activated Ala-AMP. The other activity is designated 'posttransfer' editing and involves deacylation of mischarged Ala-tRNA(Pro). The misacylated Cys-tRNA(Pro) is not edited by ProRS. The polypeptide is Proline--tRNA ligase (Actinobacillus pleuropneumoniae serotype 5b (strain L20)).